We begin with the raw amino-acid sequence, 548 residues long: Glucose-6-phosphate isomerase (548 aa).

Glu-359 acts as the Proton donor in catalysis. Active-site residues include His-390 and Lys-510.

This sequence belongs to the GPI family.

Its subcellular location is the cytoplasm. It carries out the reaction alpha-D-glucose 6-phosphate = beta-D-fructose 6-phosphate. It participates in carbohydrate biosynthesis; gluconeogenesis. The protein operates within carbohydrate degradation; glycolysis; D-glyceraldehyde 3-phosphate and glycerone phosphate from D-glucose: step 2/4. Its function is as follows. Catalyzes the reversible isomerization of glucose-6-phosphate to fructose-6-phosphate. The chain is Glucose-6-phosphate isomerase from Gloeobacter violaceus (strain ATCC 29082 / PCC 7421).